The chain runs to 105 residues: Large ribosomal subunit protein bL21 (105 aa).

Belongs to the bacterial ribosomal protein bL21 family. Part of the 50S ribosomal subunit. Contacts protein L20.

Its function is as follows. This protein binds to 23S rRNA in the presence of protein L20. This Desulfatibacillum aliphaticivorans protein is Large ribosomal subunit protein bL21.